A 193-amino-acid polypeptide reads, in one-letter code: tRNA (cytidine(56)-2'-O)-methyltransferase (193 aa).

S-adenosyl-L-methionine is bound by residues Leu-86 and Gly-115 to Val-119.

The protein belongs to the aTrm56 family. As to quaternary structure, homodimer.

It localises to the cytoplasm. The catalysed reaction is cytidine(56) in tRNA + S-adenosyl-L-methionine = 2'-O-methylcytidine(56) in tRNA + S-adenosyl-L-homocysteine + H(+). Specifically catalyzes the AdoMet-dependent 2'-O-ribose methylation of cytidine at position 56 in tRNAs. This is tRNA (cytidine(56)-2'-O)-methyltransferase from Haloquadratum walsbyi (strain DSM 16790 / HBSQ001).